A 198-amino-acid chain; its full sequence is NAD(P)H dehydrogenase (quinone) (198 aa).

The Flavodoxin-like domain maps to 4–189 (ILVLYYSMYG…SIARYQGEYV (186 aa)). FMN is bound by residues 10–15 (SMYGHI) and 78–80 (TRF). Tyr12 provides a ligand contact to NAD(+). Residue Trp98 participates in substrate binding. FMN-binding positions include 113-118 (STGTGG) and His133.

The protein belongs to the WrbA family. Requires FMN as cofactor.

It carries out the reaction a quinone + NADH + H(+) = a quinol + NAD(+). The catalysed reaction is a quinone + NADPH + H(+) = a quinol + NADP(+). The protein is NAD(P)H dehydrogenase (quinone) of Citrobacter koseri (strain ATCC BAA-895 / CDC 4225-83 / SGSC4696).